The chain runs to 189 residues: UPF0494 membrane protein C977.06 (189 aa).

3 consecutive transmembrane segments (helical) span residues 78–98 (WPLLIIWCILIVFAIDKNFEV), 120–140 (IWGPIAIYICLFVLLLLGLIY), and 148–168 (AIPLISIVIAAVVVIIAVAMV).

The protein belongs to the UPF0494 family.

Its subcellular location is the membrane. The polypeptide is UPF0494 membrane protein C977.06 (Schizosaccharomyces pombe (strain 972 / ATCC 24843) (Fission yeast)).